A 491-amino-acid chain; its full sequence is MEMNPLLVCATVAIVFATTTIIRILFSSSSLPQMKWPSGPRKLPIIGNLHQLGDDVLHVALAKLAKVHGSVMTIWIGSWRPVIVISDIEKAWEVLVNKSADYGARDMPEITKIASASWHTISTSDAGSFWQNVRKGLQSGAMGPLNVAAQNQYQERDMKRLIKAMSDEAANNNGIVKPLDHIKKNTVRLLTRLIFGQAFDDNKFIESMHYEIEDIIRISGYARLAEAFYYAKYLPSHKKAEREAFLVKCRVEELVRPLLSSKPPTNSYLYFLLSQNFEEEVIIFCIFELYLLGVDSTSSTTTWALAYLIREQGAQEKLYQDIRMTLGDVDLVKIEDVNKLKYLQGVVKETMRMKPIAPLAIPHKTAKETTLMGTKVAKGTRIMVNLYALHHNQNIWPDPYKFMPERFLEGETGTAYNKAMEQSFLPFSAGMRICAGMDLGKLQFAFALANLVNAFKWSCVEEGKLPDMGEELSFVLLMKTPLEARIAGRNV.

A helical membrane pass occupies residues 6–26 (LLVCATVAIVFATTTIIRILF). A heme-binding site is contributed by C434.

This sequence belongs to the cytochrome P450 family. It depends on heme as a cofactor. Expressed at low levels in roots.

Its subcellular location is the endoplasmic reticulum membrane. The protein localises to the microsome membrane. The catalysed reaction is (S)-tetrahydrocolumbamine + reduced [NADPH--hemoprotein reductase] + O2 = (S)-canadine + oxidized [NADPH--hemoprotein reductase] + 2 H2O + H(+). Involved in the last but one step of the biosynthesis of berberine, an antimicrobial benzylisoquinoline alkaloid. Converts (S)-tetrahydrocolumbamine (THC) to (S)-tetrahydroberberine (THB) also called (S)-canadine. This is (S)-canadine synthase (CYP719A1) from Coptis japonica (Japanese goldthread).